The chain runs to 265 residues: Shikimate dehydrogenase (NADP(+)) (265 aa).

Shikimate contacts are provided by residues 15–17 (SLS) and Thr62. Catalysis depends on Lys66, which acts as the Proton acceptor. Glu78 contributes to the NADP(+) binding site. Shikimate-binding residues include Asn87 and Asp102. NADP(+)-binding positions include 126–130 (GAGGV), 150–155 (NRTELK), and Val210. Residue Tyr212 participates in shikimate binding. Residue Gly233 coordinates NADP(+).

The protein belongs to the shikimate dehydrogenase family. As to quaternary structure, homodimer.

The enzyme catalyses shikimate + NADP(+) = 3-dehydroshikimate + NADPH + H(+). It functions in the pathway metabolic intermediate biosynthesis; chorismate biosynthesis; chorismate from D-erythrose 4-phosphate and phosphoenolpyruvate: step 4/7. Involved in the biosynthesis of the chorismate, which leads to the biosynthesis of aromatic amino acids. Catalyzes the reversible NADPH linked reduction of 3-dehydroshikimate (DHSA) to yield shikimate (SA). The chain is Shikimate dehydrogenase (NADP(+)) from Pelagibacter ubique (strain HTCC1062).